A 1582-amino-acid chain; its full sequence is Sca1 complex scaffold protein scaA (1582 aa).

Composition is skewed to low complexity over residues 1–14 and 109–131; these read MSSL…TPST and LSPS…TTST. 2 disordered regions span residues 1–22 and 108–147; these read MSSL…TFSK and GLSP…QIKK. One copy of the TPR 1 repeat lies at 4–37; the sequence is LDPSLSTTPSTNRRGTFSKAKSFRRAALNLEPQG. The TPR 2 repeat unit spans residues 166–199; it reads IYTSFPESMAFDDYMDYEESLVEWKRQVEQNLGI. The disordered stretch occupies residues 246 to 349; sequence IKETNSSVND…PSTGSLAGFV (104 aa). 3 stretches are compositionally biased toward polar residues: residues 249–267, 288–310, and 318–332; these read TNSS…PTLR, NKDN…NSGI, and SDTS…QLDG. Residue S359 is modified to Phosphoserine; by PKB. The interval 400-600 is gefA and gefH binding; the sequence is RSGSGFGMDH…QRQTSTWFRG (201 aa). Disordered regions lie at residues 468–493 and 686–734; these read PKNS…GVGG and SLSS…DKDK. Composition is skewed to gly residues over residues 478–493 and 694–714; these read GSGG…GVGG and QQQG…GSGS. Over residues 715–726 the composition is skewed to low complexity; sequence GLNMSGTSGSSG. Residues 742 to 777 form a TPR 3 repeat; it reads MHSINNTTNVGTKEDRRQYTKILQTYEQRLQFSFRL. Residues 864–875 show a composition bias toward gly residues; the sequence is GGGSGGASGGGI. A disordered region spans residues 864 to 978; the sequence is GGGSGGASGG…GSISTHPNTP (115 aa). Positions 903-928 are enriched in low complexity; the sequence is HIPSGSSLLSSPPNRQGSTGSFSFIG. Residues 940-953 show a composition bias toward polar residues; the sequence is NSSSLESPRTQSQL. Residues 960–972 are compositionally biased toward low complexity; sequence GSSPRSHSGGSIS. A pppA and pho2B binding region spans residues 1000-1400; the sequence is FLDLTNEKLA…SIKKEGNLYN (401 aa). One copy of the TPR 4 repeat lies at 1080–1113; the sequence is TQEVVRLVFVYYYLGIIQERLNFFSNNVGILGFV.

As to quaternary structure, component of the Sca1 complex composed of at least gefA, gefH, scaA, phr, and the protein phosphatase 2A subunits pppA and pho2B. In terms of processing, phosphorylated at Ser-359 by PKB and PKBR1 is induced by chemoattractant.

It localises to the cell membrane. In terms of biological role, component of the Sca1 complex, a regulator of cell motility, chemotaxis and signal relay. The Sca1 complex is recruited to the plasma membrane in a chemoattractant- and F-actin-dependent manner and is enriched at the leading edge of chemotaxing cells where it regulates F-actin dynamics and signal relay by controlling the activation of rasC and the downstream target of rapamycin complex 2 (TORC2)-Akt/protein kinase B (PKB) pathway. ScaA acts as a molecular scaffold, bringing together gefA, gefH and phr with PP2A. The sequence is that of Sca1 complex scaffold protein scaA from Dictyostelium discoideum (Social amoeba).